The chain runs to 429 residues: UDP-N-acetylglucosamine 1-carboxyvinyltransferase 2 (429 aa).

Position 22-23 (22-23 (KN)) interacts with phosphoenolpyruvate. A UDP-N-acetyl-alpha-D-glucosamine-binding site is contributed by Arg-93. Cys-117 acts as the Proton donor in catalysis. 2-(S-cysteinyl)pyruvic acid O-phosphothioketal is present on Cys-117. UDP-N-acetyl-alpha-D-glucosamine-binding positions include 122–126 (RPIDQ), Asp-305, and Ile-327.

Belongs to the EPSP synthase family. MurA subfamily.

It localises to the cytoplasm. The enzyme catalyses phosphoenolpyruvate + UDP-N-acetyl-alpha-D-glucosamine = UDP-N-acetyl-3-O-(1-carboxyvinyl)-alpha-D-glucosamine + phosphate. Its pathway is cell wall biogenesis; peptidoglycan biosynthesis. Cell wall formation. Adds enolpyruvyl to UDP-N-acetylglucosamine. The protein is UDP-N-acetylglucosamine 1-carboxyvinyltransferase 2 of Bacillus anthracis.